We begin with the raw amino-acid sequence, 447 residues long: Na(+)-translocating NADH-quinone reductase subunit A (447 aa).

The protein belongs to the NqrA family. In terms of assembly, composed of six subunits; NqrA, NqrB, NqrC, NqrD, NqrE and NqrF.

The enzyme catalyses a ubiquinone + n Na(+)(in) + NADH + H(+) = a ubiquinol + n Na(+)(out) + NAD(+). Its function is as follows. NQR complex catalyzes the reduction of ubiquinone-1 to ubiquinol by two successive reactions, coupled with the transport of Na(+) ions from the cytoplasm to the periplasm. NqrA to NqrE are probably involved in the second step, the conversion of ubisemiquinone to ubiquinol. In Klebsiella pneumoniae subsp. pneumoniae (strain ATCC 700721 / MGH 78578), this protein is Na(+)-translocating NADH-quinone reductase subunit A.